We begin with the raw amino-acid sequence, 197 residues long: Nucleoid occlusion factor SlmA (197 aa).

One can recognise an HTH tetR-type domain in the interval 7-67 (INRREHILQC…GLIDFIEESL (61 aa)). Positions 30–49 (TTAKLAAEVGVSEAALYRHF) form a DNA-binding region, H-T-H motif.

Belongs to the nucleoid occlusion factor SlmA family. As to quaternary structure, homodimer. Interacts with FtsZ.

It is found in the cytoplasm. It localises to the nucleoid. Its function is as follows. Required for nucleoid occlusion (NO) phenomenon, which prevents Z-ring formation and cell division over the nucleoid. Acts as a DNA-associated cell division inhibitor that binds simultaneously chromosomal DNA and FtsZ, and disrupts the assembly of FtsZ polymers. SlmA-DNA-binding sequences (SBS) are dispersed on non-Ter regions of the chromosome, preventing FtsZ polymerization at these regions. This chain is Nucleoid occlusion factor SlmA, found in Shewanella loihica (strain ATCC BAA-1088 / PV-4).